A 150-amino-acid chain; its full sequence is Large ribosomal subunit protein bL9 (150 aa).

It belongs to the bacterial ribosomal protein bL9 family.

Its function is as follows. Binds to the 23S rRNA. This Cupriavidus taiwanensis (strain DSM 17343 / BCRC 17206 / CCUG 44338 / CIP 107171 / LMG 19424 / R1) (Ralstonia taiwanensis (strain LMG 19424)) protein is Large ribosomal subunit protein bL9.